The following is a 548-amino-acid chain: Dihydroxy-acid dehydratase (548 aa).

Mg(2+) is bound at residue aspartate 78. Cysteine 119 provides a ligand contact to [2Fe-2S] cluster. Mg(2+) is bound by residues aspartate 120 and lysine 121. N6-carboxylysine is present on lysine 121. Cysteine 185 is a binding site for [2Fe-2S] cluster. Glutamate 438 serves as a coordination point for Mg(2+). Serine 464 serves as the catalytic Proton acceptor.

Belongs to the IlvD/Edd family. Homodimer. [2Fe-2S] cluster serves as cofactor. The cofactor is Mg(2+).

The catalysed reaction is (2R)-2,3-dihydroxy-3-methylbutanoate = 3-methyl-2-oxobutanoate + H2O. It carries out the reaction (2R,3R)-2,3-dihydroxy-3-methylpentanoate = (S)-3-methyl-2-oxopentanoate + H2O. Its pathway is amino-acid biosynthesis; L-isoleucine biosynthesis; L-isoleucine from 2-oxobutanoate: step 3/4. The protein operates within amino-acid biosynthesis; L-valine biosynthesis; L-valine from pyruvate: step 3/4. Its function is as follows. Functions in the biosynthesis of branched-chain amino acids. Catalyzes the dehydration of (2R,3R)-2,3-dihydroxy-3-methylpentanoate (2,3-dihydroxy-3-methylvalerate) into 2-oxo-3-methylpentanoate (2-oxo-3-methylvalerate) and of (2R)-2,3-dihydroxy-3-methylbutanoate (2,3-dihydroxyisovalerate) into 2-oxo-3-methylbutanoate (2-oxoisovalerate), the penultimate precursor to L-isoleucine and L-valine, respectively. In Methanothrix thermoacetophila (strain DSM 6194 / JCM 14653 / NBRC 101360 / PT) (Methanosaeta thermophila), this protein is Dihydroxy-acid dehydratase.